Here is a 54-residue protein sequence, read N- to C-terminus: uncharacterized protein (54 aa).

The interval 1 to 38 (MFPNSNGPNKMKALVAPSNSSTTSKTNNNNLPPNGRSS) is disordered. A compositionally biased stretch (low complexity) spans 17–38 (PSNSSTTSKTNNNNLPPNGRSS).

This is an uncharacterized protein from Dictyostelium discoideum (Social amoeba).